A 162-amino-acid chain; its full sequence is NADH-quinone oxidoreductase subunit I (162 aa).

4Fe-4S ferredoxin-type domains are found at residues 53–83 (LRRY…IEPE) and 93–122 (RRYD…EGPN). Positions 63, 66, 69, 73, 102, 105, 108, and 112 each coordinate [4Fe-4S] cluster.

It belongs to the complex I 23 kDa subunit family. In terms of assembly, NDH-1 is composed of 14 different subunits. Subunits NuoA, H, J, K, L, M, N constitute the membrane sector of the complex. Requires [4Fe-4S] cluster as cofactor.

It localises to the cell inner membrane. The enzyme catalyses a quinone + NADH + 5 H(+)(in) = a quinol + NAD(+) + 4 H(+)(out). Functionally, NDH-1 shuttles electrons from NADH, via FMN and iron-sulfur (Fe-S) centers, to quinones in the respiratory chain. The immediate electron acceptor for the enzyme in this species is believed to be ubiquinone. Couples the redox reaction to proton translocation (for every two electrons transferred, four hydrogen ions are translocated across the cytoplasmic membrane), and thus conserves the redox energy in a proton gradient. This is NADH-quinone oxidoreductase subunit I from Paramagnetospirillum magneticum (strain ATCC 700264 / AMB-1) (Magnetospirillum magneticum).